The following is a 358-amino-acid chain: 3-dehydroquinate synthase (358 aa).

NAD(+) contacts are provided by residues 70-75 (DGEQFK), 104-108 (GVIGD), 128-129 (TT), K141, K150, and 168-171 (CLHT). Residues E183, H246, and H263 each coordinate Zn(2+).

This sequence belongs to the sugar phosphate cyclases superfamily. Dehydroquinate synthase family. Co(2+) serves as cofactor. The cofactor is Zn(2+). NAD(+) is required as a cofactor.

The protein localises to the cytoplasm. It catalyses the reaction 7-phospho-2-dehydro-3-deoxy-D-arabino-heptonate = 3-dehydroquinate + phosphate. The protein operates within metabolic intermediate biosynthesis; chorismate biosynthesis; chorismate from D-erythrose 4-phosphate and phosphoenolpyruvate: step 2/7. In terms of biological role, catalyzes the conversion of 3-deoxy-D-arabino-heptulosonate 7-phosphate (DAHP) to dehydroquinate (DHQ). This is 3-dehydroquinate synthase from Shewanella baltica (strain OS185).